Consider the following 194-residue polypeptide: MGVKNIERLIEERQKIEPINPAELTLEEKVVEIRRTTRVVEGGRRFSFSTLAVVGDRNGHVGFGHGKANEVPPSIAKAIADAKKHLIRVPLIEGTIPHDVIGKYESAVVLLKPARKGTGVVAGGPVRPVLELLGVTDILTKIIGRTTNPNNTVRAVFDALLQIRSPEQVAAIRGVDEEKIRKNYRIYASAPIVK.

An S5 DRBM domain is found at 26 to 89 (LEEKVVEIRR…ADAKKHLIRV (64 aa)).

Belongs to the universal ribosomal protein uS5 family. In terms of assembly, part of the 30S ribosomal subunit. Contacts proteins S4 and S8.

In terms of biological role, with S4 and S12 plays an important role in translational accuracy. Functionally, located at the back of the 30S subunit body where it stabilizes the conformation of the head with respect to the body. This Persephonella marina (strain DSM 14350 / EX-H1) protein is Small ribosomal subunit protein uS5.